The sequence spans 559 residues: Non-homologous end joining factor IFFO1 (559 aa).

Positions Gly21 to Gly57 are disordered. The span at Pro39–Gly57 shows a compositional bias: pro residues. Residues Ala65–Arg116 are LMNA binding. The region spanning Asn73 to Lys526 is the IF rod domain. Positions Arg85–Arg117 form a coiled coil. A disordered region spans residues Ser158–Ser187. Positions Glu237–Leu301 form a coiled coil. The tract at residues Ser360–Ser394 is disordered. Residues Glu450–Arg525 are XCCR4 binding. Required for localization to the double-strand breaks (DSBs). Positions Leu455–Met501 form a coiled coil. The disordered stretch occupies residues Thr520 to Arg559. The span at Arg550 to Arg559 shows a compositional bias: basic and acidic residues.

This sequence belongs to the intermediate filament family. Forms a heterotetramer with XRCC4. The interaction with XRCC4 is direct, involves LIG4-free XRCC4 and leads to relocalization of IFFO1 at the double-strand break (DSB) sites. Interacts with LMNA; the interaction forms an interior nucleoskeleton and the recruitment to DNA double-strand breaks. In terms of tissue distribution, ubiquitously expressed.

It localises to the nucleus. The protein localises to the nucleoplasm. It is found in the nucleus inner membrane. Its subcellular location is the nucleus matrix. Its function is as follows. Nuclear matrix protein involved in the immobilization of broken DNA ends and the suppression of chromosome translocation during DNA double-strand breaks (DSBs). Interacts with the nuclear lamina component LMNA, resulting in the formation of a nucleoskeleton that relocalizes to the DSB sites in a XRCC4-dependent manner and promotes the immobilization of the broken ends, thereby preventing chromosome translocation. Acts as a scaffold that allows the DNA repair protein XRCC4 and LMNA to assemble into a complex at the DSB sites. The chain is Non-homologous end joining factor IFFO1 from Homo sapiens (Human).